The following is a 322-amino-acid chain: Beta-ketoacyl-[acyl-carrier-protein] synthase III (322 aa).

Residues cysteine 112 and histidine 249 contribute to the active site. Residues glutamine 250–arginine 254 form an ACP-binding region. Residue asparagine 279 is part of the active site.

The protein belongs to the thiolase-like superfamily. FabH family. In terms of assembly, homodimer.

It is found in the cytoplasm. The enzyme catalyses malonyl-[ACP] + acetyl-CoA + H(+) = 3-oxobutanoyl-[ACP] + CO2 + CoA. It participates in lipid metabolism; fatty acid biosynthesis. Its function is as follows. Catalyzes the condensation reaction of fatty acid synthesis by the addition to an acyl acceptor of two carbons from malonyl-ACP. Catalyzes the first condensation reaction which initiates fatty acid synthesis and may therefore play a role in governing the total rate of fatty acid production. Possesses both acetoacetyl-ACP synthase and acetyl transacylase activities. Its substrate specificity determines the biosynthesis of branched-chain and/or straight-chain of fatty acids. This Caulobacter vibrioides (strain ATCC 19089 / CIP 103742 / CB 15) (Caulobacter crescentus) protein is Beta-ketoacyl-[acyl-carrier-protein] synthase III.